Reading from the N-terminus, the 295-residue chain is Pyridoxal 5'-phosphate synthase subunit PdxS (295 aa).

D25 is a D-ribose 5-phosphate binding site. The Schiff-base intermediate with D-ribose 5-phosphate role is filled by K82. D-ribose 5-phosphate is bound at residue G154. Position 166 (R166) interacts with D-glyceraldehyde 3-phosphate. D-ribose 5-phosphate contacts are provided by residues G215 and 236–237 (GS).

This sequence belongs to the PdxS/SNZ family. In terms of assembly, in the presence of PdxT, forms a dodecamer of heterodimers.

The enzyme catalyses aldehydo-D-ribose 5-phosphate + D-glyceraldehyde 3-phosphate + L-glutamine = pyridoxal 5'-phosphate + L-glutamate + phosphate + 3 H2O + H(+). It participates in cofactor biosynthesis; pyridoxal 5'-phosphate biosynthesis. Its function is as follows. Catalyzes the formation of pyridoxal 5'-phosphate from ribose 5-phosphate (RBP), glyceraldehyde 3-phosphate (G3P) and ammonia. The ammonia is provided by the PdxT subunit. Can also use ribulose 5-phosphate and dihydroxyacetone phosphate as substrates, resulting from enzyme-catalyzed isomerization of RBP and G3P, respectively. The sequence is that of Pyridoxal 5'-phosphate synthase subunit PdxS from Staphylococcus aureus (strain Mu3 / ATCC 700698).